Here is a 435-residue protein sequence, read N- to C-terminus: Adenylosuccinate synthetase (435 aa).

GTP is bound by residues 13-19 (GDEGKGK) and 41-43 (GHT). The active-site Proton acceptor is the Asp14. Mg(2+) is bound by residues Asp14 and Gly41. Residues 14-17 (DEGK), 39-42 (NAGH), Thr131, Arg145, Gln226, Thr241, and Arg309 contribute to the IMP site. His42 serves as the catalytic Proton donor. 305-311 (TVTGRKR) lines the substrate pocket. GTP-binding positions include Arg311, 337 to 339 (KLD), and 419 to 421 (STG).

This sequence belongs to the adenylosuccinate synthetase family. In terms of assembly, homodimer. It depends on Mg(2+) as a cofactor.

It localises to the cytoplasm. It catalyses the reaction IMP + L-aspartate + GTP = N(6)-(1,2-dicarboxyethyl)-AMP + GDP + phosphate + 2 H(+). It participates in purine metabolism; AMP biosynthesis via de novo pathway; AMP from IMP: step 1/2. Its function is as follows. Plays an important role in the de novo pathway of purine nucleotide biosynthesis. Catalyzes the first committed step in the biosynthesis of AMP from IMP. This is Adenylosuccinate synthetase from Dechloromonas aromatica (strain RCB).